The primary structure comprises 109 residues: Flowering-promoting factor 1-like protein 1 (109 aa).

Positions 73–81 (RGSLDLISL) match the D-box motif.

Belongs to the FPF1 family. As to quaternary structure, interacts with RPT4. In terms of processing, ubiquitinated. RPT4 mediates its proteasome-dependent degradation. Specifically expressed in the apical meristem, the elongation zone of root tip, steles of the branch zone, and the young lateral root. Also expressed in spikes. Expressed in roots and spikes (at protein level).

The protein resides in the cytoplasm. It localises to the nucleus. Its function is as follows. GTP-binding protein that functions in the development of root systems, which are mediated by auxin. Acts as a cell cycle regulator during root development. Proteasome-mediated degradation of the protein is necessary for the transition of metaphase to anaphase in mitosis. The polypeptide is Flowering-promoting factor 1-like protein 1 (RAA1) (Oryza sativa subsp. japonica (Rice)).